The chain runs to 209 residues: uncharacterized protein (209 aa).

An N-terminal signal peptide occupies residues Met-1–Ala-17. The disordered stretch occupies residues Ala-17–Ser-106. Cys-18 is lipidated: N-palmitoyl cysteine. Cys-18 is lipidated: S-diacylglycerol cysteine. Basic and acidic residues predominate over residues Asp-23 to Ser-70. Low complexity predominate over residues Ala-71 to Ser-106.

Its subcellular location is the cell membrane. This is an uncharacterized protein from Staphylococcus aureus (strain MRSA252).